The primary structure comprises 489 residues: WRKY transcription factor 72B (489 aa).

3 disordered regions span residues M1 to E100, Q131 to D159, and D234 to V267. Basic and acidic residues-rich tracts occupy residues G32–M52 and T83–E100. Positions H84–K132 form a coiled coil. Residues S138 to T147 are compositionally biased toward low complexity. Positions C273–P339 form a DNA-binding region, WRKY. Disordered stretches follow at residues L356–T381 and T427–N454. Composition is skewed to low complexity over residues T371 to T381 and T427 to S438.

Belongs to the WRKY group II-b family.

The protein resides in the nucleus. Its function is as follows. In association with WRKY72A, contributes to basal defense against root-knot nematodes (RKNs) and potato aphids, as well as Mi-1-mediated gene-for-gene resistance to these pests. Both WRKY72A and WRKY72B are not required for gene-for-gene resistance mediated by Pto, another tomato R gene. This is WRKY transcription factor 72B from Solanum lycopersicum (Tomato).